The primary structure comprises 276 residues: Replication protein A 32 kDa subunit-A (276 aa).

Residues Gly19–Gly31 show a composition bias toward gly residues. The segment at Gly19–Gln47 is disordered. Residues Val77 to Pro151 constitute a DNA-binding region (OB).

It belongs to the replication factor A protein 2 family. Component of the replication protein A complex (RPA/RP-A), a heterotrimeric complex composed of RPA1, RPA2 and RPA3. In terms of processing, differentially phosphorylated throughout the cell cycle, becoming phosphorylated at the G1-S transition and dephosphorylated in late mitosis. Phosphorylation increases upon replication fork stalling.

It is found in the nucleus. The protein localises to the PML body. As part of the heterotrimeric replication protein A complex (RPA/RP-A), binds and stabilizes single-stranded DNA intermediates, that form during DNA replication or upon DNA stress. It prevents their reannealing and in parallel, recruits and activates different proteins and complexes involved in DNA metabolism. Thereby, it plays an essential role both in DNA replication and the cellular response to DNA damage. The protein is Replication protein A 32 kDa subunit-A (rpa2-a) of Xenopus laevis (African clawed frog).